The chain runs to 273 residues: 2,3,4,5-tetrahydropyridine-2,6-dicarboxylate N-succinyltransferase (273 aa).

Positions 104 and 141 each coordinate substrate.

This sequence belongs to the transferase hexapeptide repeat family. As to quaternary structure, homotrimer.

The protein localises to the cytoplasm. The enzyme catalyses (S)-2,3,4,5-tetrahydrodipicolinate + succinyl-CoA + H2O = (S)-2-succinylamino-6-oxoheptanedioate + CoA. Its pathway is amino-acid biosynthesis; L-lysine biosynthesis via DAP pathway; LL-2,6-diaminopimelate from (S)-tetrahydrodipicolinate (succinylase route): step 1/3. This Acinetobacter baylyi (strain ATCC 33305 / BD413 / ADP1) protein is 2,3,4,5-tetrahydropyridine-2,6-dicarboxylate N-succinyltransferase.